The sequence spans 388 residues: Probable mannan endo-1,4-beta-mannosidase A-1 (388 aa).

The first 20 residues, 1–20 (MKLSPLMALAGLASAQLALA), serve as a signal peptide directing secretion. Tryptophan 93 and asparagine 206 together coordinate substrate. Glutamate 207 functions as the Proton donor in the catalytic mechanism. Asparagine 264 carries N-linked (GlcNAc...) asparagine glycosylation. Residue tyrosine 282 coordinates substrate. The Nucleophile role is filled by glutamate 315. The N-linked (GlcNAc...) asparagine glycan is linked to asparagine 335. Tryptophan 345 contacts substrate.

It belongs to the glycosyl hydrolase 5 (cellulase A) family.

The protein localises to the secreted. The catalysed reaction is Random hydrolysis of (1-&gt;4)-beta-D-mannosidic linkages in mannans, galactomannans and glucomannans.. Endo-1,4-mannanase, a crucial enzyme for depolymerization of seed galactomannans and wood galactoglucomannans. This Aspergillus terreus (strain NIH 2624 / FGSC A1156) protein is Probable mannan endo-1,4-beta-mannosidase A-1 (manA-1).